The following is a 656-amino-acid chain: Chaperone protein DnaK (656 aa).

Disordered stretches follow at residues 488–532 (EMQE…DAVD) and 579–656 (YQQQ…DEDE). Residues 492-513 (EAEKHAEEDEKRRERIEARNEA) show a composition bias toward basic and acidic residues. The span at 523-532 (LLDENEDAVD) shows a compositional bias: acidic residues. Gly residues predominate over residues 584–635 (GEGGAGAGAGAAGGMGGAGPGGMGGAGPGGMGGAGPGGMGGAGPGAGAGQQG). Residues 636 to 656 (DGEEFVDADFEDVDDEDDEDE) show a composition bias toward acidic residues.

It belongs to the heat shock protein 70 family.

Functionally, acts as a chaperone. The chain is Chaperone protein DnaK from Natronomonas pharaonis (strain ATCC 35678 / DSM 2160 / CIP 103997 / JCM 8858 / NBRC 14720 / NCIMB 2260 / Gabara) (Halobacterium pharaonis).